Here is a 182-residue protein sequence, read N- to C-terminus: uncharacterized protein (182 aa).

A run of 2 helical transmembrane segments spans residues 58 to 78 and 81 to 101; these read ILFGFMIIALISFNILLYVVY and PVSITSIIAEILIIISMIIIW.

This sequence to M.jannaschii MJ0803.

The protein resides in the cell membrane. This is an uncharacterized protein from Methanocaldococcus jannaschii (strain ATCC 43067 / DSM 2661 / JAL-1 / JCM 10045 / NBRC 100440) (Methanococcus jannaschii).